Reading from the N-terminus, the 394-residue chain is Elongation factor Tu-A (394 aa).

Residues 10–204 form the tr-type G domain; it reads KPHVNVGTIG…HLDTYIPEPQ (195 aa). A G1 region spans residues 19-26; sequence GHVDHGKT. 19 to 26 lines the GTP pocket; the sequence is GHVDHGKT. Residue threonine 26 participates in Mg(2+) binding. Residues 60–64 form a G2 region; the sequence is GITIN. A G3 region spans residues 81 to 84; the sequence is DCPG. Residues 81 to 85 and 136 to 139 each bind GTP; these read DCPGH and NKCD. The tract at residues 136 to 139 is G4; it reads NKCD. The interval 174–176 is G5; it reads SAL.

Belongs to the TRAFAC class translation factor GTPase superfamily. Classic translation factor GTPase family. EF-Tu/EF-1A subfamily. In terms of assembly, monomer.

The protein resides in the cytoplasm. The enzyme catalyses GTP + H2O = GDP + phosphate + H(+). Functionally, GTP hydrolase that promotes the GTP-dependent binding of aminoacyl-tRNA to the A-site of ribosomes during protein biosynthesis. The chain is Elongation factor Tu-A from Pasteurella multocida (strain Pm70).